The primary structure comprises 140 residues: MGTPVKILVVLFSVIVLLAVAQSSYLPPCEPVNETVAVEKEGCPKCLVLQTTICSGHCLTKEPVYKSPFSTVYQHVCTYRDVRYETVRLPDCPPGVDPHITYPVALSCDCSLCTMDTSDCTIESLQPDFCMSQREDFLVY.

Positions 1-23 are cleaved as a signal peptide; the sequence is MGTPVKILVVLFSVIVLLAVAQS. 6 disulfides stabilise this stretch: Cys-29–Cys-77, Cys-43–Cys-92, Cys-46–Cys-130, Cys-54–Cys-108, Cys-58–Cys-110, and Cys-113–Cys-120. Asn-33 is a glycosylation site (N-linked (GlcNAc...) asparagine).

Belongs to the glycoprotein hormones subunit beta family. Heterodimer of an alpha and a beta chain.

The protein resides in the secreted. Its function is as follows. Involved in gametogenesis and steroidogenesis. This chain is Gonadotropin subunit beta-2 (cgbb), found in Carassius auratus (Goldfish).